Reading from the N-terminus, the 105-residue chain is Phosphoribosyl-ATP pyrophosphatase (105 aa).

It belongs to the PRA-PH family.

The protein resides in the cytoplasm. The enzyme catalyses 1-(5-phospho-beta-D-ribosyl)-ATP + H2O = 1-(5-phospho-beta-D-ribosyl)-5'-AMP + diphosphate + H(+). It functions in the pathway amino-acid biosynthesis; L-histidine biosynthesis; L-histidine from 5-phospho-alpha-D-ribose 1-diphosphate: step 2/9. This is Phosphoribosyl-ATP pyrophosphatase from Vesicomyosocius okutanii subsp. Calyptogena okutanii (strain HA).